We begin with the raw amino-acid sequence, 113 residues long: UPF0482 protein YnfB (113 aa).

The first 28 residues, 1 to 28, serve as a signal peptide directing secretion; that stretch reads MKITLSKRIGLLAILLPCALALSTTVHA.

It belongs to the UPF0482 family.

In Escherichia coli O8 (strain IAI1), this protein is UPF0482 protein YnfB.